The sequence spans 414 residues: Myb1 protein (414 aa).

Myb-like domains are found at residues 242-266 (WNEV…LYYG), 268-320 (FEDD…IKIN), and 328-381 (KVKL…TNLN).

The protein resides in the nucleus. Transcriptional activator. Has a role in the parasite erythrocytic cycle where it directly regulates key genes involved in cell cycle regulation and progression. Binds directly to Myb regulatory elements. In Plasmodium falciparum (isolate 3D7), this protein is Myb1 protein.